The sequence spans 373 residues: Probable tRNA sulfurtransferase (373 aa).

A THUMP domain is found at 54-158 (NKNIEELSKV…NDVAYFYHKI (105 aa)). ATP contacts are provided by residues 176 to 177 (LF), 201 to 202 (NF), Lys-256, Gly-278, and Gln-287.

The protein belongs to the ThiI family.

It localises to the cytoplasm. It carries out the reaction [ThiI sulfur-carrier protein]-S-sulfanyl-L-cysteine + a uridine in tRNA + 2 reduced [2Fe-2S]-[ferredoxin] + ATP + H(+) = [ThiI sulfur-carrier protein]-L-cysteine + a 4-thiouridine in tRNA + 2 oxidized [2Fe-2S]-[ferredoxin] + AMP + diphosphate. It catalyses the reaction [ThiS sulfur-carrier protein]-C-terminal Gly-Gly-AMP + S-sulfanyl-L-cysteinyl-[cysteine desulfurase] + AH2 = [ThiS sulfur-carrier protein]-C-terminal-Gly-aminoethanethioate + L-cysteinyl-[cysteine desulfurase] + A + AMP + 2 H(+). The protein operates within cofactor biosynthesis; thiamine diphosphate biosynthesis. Its function is as follows. Catalyzes the ATP-dependent transfer of a sulfur to tRNA to produce 4-thiouridine in position 8 of tRNAs, which functions as a near-UV photosensor. Also catalyzes the transfer of sulfur to the sulfur carrier protein ThiS, forming ThiS-thiocarboxylate. This is a step in the synthesis of thiazole, in the thiamine biosynthesis pathway. The sulfur is donated as persulfide by IscS. This Saccharolobus islandicus (strain M.16.4 / Kamchatka #3) (Sulfolobus islandicus) protein is Probable tRNA sulfurtransferase.